Reading from the N-terminus, the 142-residue chain is Large ribosomal subunit protein uL11 (142 aa).

This sequence belongs to the universal ribosomal protein uL11 family. In terms of assembly, part of the ribosomal stalk of the 50S ribosomal subunit. Interacts with L10 and the large rRNA to form the base of the stalk. L10 forms an elongated spine to which L12 dimers bind in a sequential fashion forming a multimeric L10(L12)X complex. In terms of processing, one or more lysine residues are methylated.

Forms part of the ribosomal stalk which helps the ribosome interact with GTP-bound translation factors. The polypeptide is Large ribosomal subunit protein uL11 (Ruthia magnifica subsp. Calyptogena magnifica).